The sequence spans 445 residues: Serine--tRNA ligase (445 aa).

229-231 (TAE) serves as a coordination point for L-serine. ATP is bound by residues 260-262 (RKE) and Val276. Residue Glu283 participates in L-serine binding. 347–350 (EVSS) provides a ligand contact to ATP. Ser383 is a binding site for L-serine.

It belongs to the class-II aminoacyl-tRNA synthetase family. Type-1 seryl-tRNA synthetase subfamily. In terms of assembly, homodimer. The tRNA molecule binds across the dimer.

It is found in the cytoplasm. It catalyses the reaction tRNA(Ser) + L-serine + ATP = L-seryl-tRNA(Ser) + AMP + diphosphate + H(+). It carries out the reaction tRNA(Sec) + L-serine + ATP = L-seryl-tRNA(Sec) + AMP + diphosphate + H(+). It functions in the pathway aminoacyl-tRNA biosynthesis; selenocysteinyl-tRNA(Sec) biosynthesis; L-seryl-tRNA(Sec) from L-serine and tRNA(Sec): step 1/1. In terms of biological role, catalyzes the attachment of serine to tRNA(Ser). Is also able to aminoacylate tRNA(Sec) with serine, to form the misacylated tRNA L-seryl-tRNA(Sec), which will be further converted into selenocysteinyl-tRNA(Sec). In Thermomicrobium roseum (strain ATCC 27502 / DSM 5159 / P-2), this protein is Serine--tRNA ligase.